Consider the following 251-residue polypeptide: YlmG homolog protein 2, chloroplastic (251 aa).

The N-terminal 51 residues, 1-51, are a transit peptide targeting the chloroplast; it reads MEASANEPAMKSLKSNPSGPIPNFFVSLSSAFTQTPLVRSNKPNLLLLPPV. The next 2 helical transmembrane spans lie at 119 to 139 and 183 to 203; these read GFAA…NGLI and FIPP…VLNA. The span at 232 to 243 shows a compositional bias: basic residues; sequence VRRRRLSSHKDH. A disordered region spans residues 232-251; the sequence is VRRRRLSSHKDHRPSSASMT.

This sequence belongs to the YggT family.

It is found in the plastid. Its subcellular location is the chloroplast thylakoid membrane. Its function is as follows. Not required for the biogenesis and accumulation of native cytochrome b6 in the thylakoid membrane. Not functionally involved in the pathway for covalent binding of the c-type heme to cytochrome b6. The protein is YlmG homolog protein 2, chloroplastic of Arabidopsis thaliana (Mouse-ear cress).